Reading from the N-terminus, the 66-residue chain is ATP synthase protein 8 (66 aa).

Residues 8–24 (PWPMVIMSMILTLFYIT) form a helical membrane-spanning segment. Position 54 is an N6-acetyllysine; alternate (K54). Position 54 is an N6-succinyllysine; alternate (K54). K57 carries the N6-acetyllysine modification.

Belongs to the ATPase protein 8 family. F-type ATPases have 2 components, CF(1) - the catalytic core - and CF(0) - the membrane proton channel. Component of an ATP synthase complex composed of ATP5PB, ATP5MC1, ATP5F1E, ATP5PD, ATP5ME, ATP5PF, ATP5MF, MT-ATP6, MT-ATP8, ATP5F1A, ATP5F1B, ATP5F1D, ATP5F1C, ATP5PO, ATP5MG, ATP5MK and ATP5MJ. Interacts with PRICKLE3.

It localises to the mitochondrion membrane. Mitochondrial membrane ATP synthase (F(1)F(0) ATP synthase or Complex V) produces ATP from ADP in the presence of a proton gradient across the membrane which is generated by electron transport complexes of the respiratory chain. F-type ATPases consist of two structural domains, F(1) - containing the extramembraneous catalytic core and F(0) - containing the membrane proton channel, linked together by a central stalk and a peripheral stalk. During catalysis, ATP synthesis in the catalytic domain of F(1) is coupled via a rotary mechanism of the central stalk subunits to proton translocation. Part of the complex F(0) domain. Minor subunit located with subunit a in the membrane. This Alouatta guariba (Brown howler monkey) protein is ATP synthase protein 8 (MT-ATP8).